Reading from the N-terminus, the 77-residue chain is U8-lycotoxin-Ls1f (77 aa).

Positions 1–20 (MKLIIFTGLVLFAIVSLIEV) are cleaved as a signal peptide. Positions 21-26 (QADNER) are excised as a propeptide.

This sequence belongs to the neurotoxin 19 (CSTX) family. 08 (U8-Lctx) subfamily. Post-translationally, contains 4 disulfide bonds. In terms of tissue distribution, expressed by the venom gland.

The protein localises to the secreted. The protein is U8-lycotoxin-Ls1f of Lycosa singoriensis (Wolf spider).